The following is a 359-amino-acid chain: Probable C-C chemokine receptor type 3 (359 aa).

At 1-38 (MAFNTDEIKTVVESFETTPYEYEWAPPCEKVRIKELGS) the chain is on the extracellular side. Residues 39 to 64 (WLLPPLYSLVFIIGLLGNMMVVLILI) form a helical membrane-spanning segment. Residues 65 to 68 (KYRK) are Cytoplasmic-facing. Residues 69–95 (LQIMTNIYLFNLAISDLLFLFTVPFWI) form a helical membrane-spanning segment. The Extracellular segment spans residues 96–111 (HYVLWNEWGFGHYMCK). C110 and C187 are joined by a disulfide. The helical transmembrane segment at 112–133 (MLSGFYYLALYSEIFFIILLTI) threads the bilayer. The Cytoplasmic segment spans residues 134-150 (DRYLAIVHAVFALRART). Residues 151 to 175 (VTFATITSIITWGLAGLAALPEFIF) form a helical membrane-spanning segment. Residues 176 to 201 (HESQDSFGEFSCSPRYPEGEEDSWKR) lie on the Extracellular side of the membrane. The helical transmembrane segment at 202–227 (FHALRMNIFGLALPLLIMVICYSGII) threads the bilayer. The Cytoplasmic segment spans residues 228-243 (KTLLRCPNKKKHKAIR). The chain crosses the membrane as a helical span at residues 244-268 (LIFVVMIVFFIFWTPYNLVLLFSAF). Residues 269-285 (HSTFLETSCQQSKHLDL) lie on the Extracellular side of the membrane. Residues 286 to 309 (AMQVTEVIAYTHCCINPVIYAFVG) form a helical membrane-spanning segment. At 310-359 (ERFRKHLRLFFHRNVAVYLGKYIPFLPGEKMERTSSVSPSTGEQEISVVF) the chain is on the cytoplasmic side.

It belongs to the G-protein coupled receptor 1 family. In terms of tissue distribution, detected in skeletal muscle and in trace amounts in leukocytes.

The protein resides in the cell membrane. Its function is as follows. Receptor for C-C type chemokine. Binds and responds to a variety of chemokines, including CCL11, CCL26, CCL7, CCL13, RANTES(CCL5) and CCL15. Subsequently transduces a signal by increasing the intracellular calcium ions level. In addition acts as a possible functional receptor for NARS1. The chain is Probable C-C chemokine receptor type 3 (Ccr3) from Mus musculus (Mouse).